Reading from the N-terminus, the 321-residue chain is Mas-related G-protein coupled receptor member D (321 aa).

Topologically, residues 1-8 (MNSTLDSS) are extracellular. N-linked (GlcNAc...) asparagine glycosylation occurs at Asn2. The chain crosses the membrane as a helical span at residues 9–29 (PAPGLTISPTMDLVTWIYFSV). Position 30 (Thr30) is a topological domain, cytoplasmic. A helical membrane pass occupies residues 31–51 (FLAMATCVGGMAGNSLVIWLL). Residues 52 to 72 (SCNGMQRSPFCVYVLNLAVAD) are Extracellular-facing. A helical membrane pass occupies residues 73-93 (FLFLFCMASMLSLETGPLLIV). At 94–146 (NISAKIYEGMRRIKYFAYTAGLSLLTAISTQRCLSVLFPIWYKCHRPRHLSSV) the chain is on the cytoplasmic side. Residues 147–167 (VSGALWALAFLMNFLASFFCV) form a helical membrane-spanning segment. The Extracellular segment spans residues 168 to 181 (QFWHPNKHQCFKVD). The chain crosses the membrane as a helical span at residues 182–202 (IVFNSLILGIFMPVMILTSTI). Topologically, residues 203–220 (LFIRVRKNSLMQRRRPRR) are cytoplasmic. The helical transmembrane segment at 221 to 241 (LYVVILTSILVFLTCSLPLGI) threads the bilayer. Over 242–260 (NWFLLYWVDVKRDVRLLYS) the chain is Extracellular. Residues 261 to 281 (CVSRFSSSLSSSANPVIYFLV) form a helical membrane-spanning segment. At 282–321 (GSQKSHRLQESLGAVLGRALRDEPEPEGRETPSTCTNDGV) the chain is on the cytoplasmic side. Positions 302–311 (RDEPEPEGRE) are enriched in basic and acidic residues. The tract at residues 302-321 (RDEPEPEGRETPSTCTNDGV) is disordered. Positions 312-321 (TPSTCTNDGV) are enriched in polar residues.

The protein belongs to the G-protein coupled receptor 1 family. Mas subfamily. Expressed in a subset of sensory neurons that includes nociceptors. Expressed in the subclass of non-peptidergic sensory neurons that are IB4(+) and VR1(-).

It is found in the cell membrane. Functionally, may regulate nociceptor function and/or development, including the sensation or modulation of pain. Functions as a specific membrane receptor for beta-alanine. The receptor couples with G-protein G(q) and G(i). This Mus musculus (Mouse) protein is Mas-related G-protein coupled receptor member D (Mrgprd).